Consider the following 213-residue polypeptide: Endonuclease III (213 aa).

Residues 101–120 (LEELLKLPGVGRKTANIVLW) form the HhH domain. Residues cysteine 180, cysteine 187, cysteine 190, and cysteine 196 each contribute to the [4Fe-4S] cluster site.

Belongs to the Nth/MutY family. The cofactor is [4Fe-4S] cluster.

The catalysed reaction is 2'-deoxyribonucleotide-(2'-deoxyribose 5'-phosphate)-2'-deoxyribonucleotide-DNA = a 3'-end 2'-deoxyribonucleotide-(2,3-dehydro-2,3-deoxyribose 5'-phosphate)-DNA + a 5'-end 5'-phospho-2'-deoxyribonucleoside-DNA + H(+). In terms of biological role, DNA repair enzyme that has both DNA N-glycosylase activity and AP-lyase activity. The DNA N-glycosylase activity releases various damaged pyrimidines from DNA by cleaving the N-glycosidic bond, leaving an AP (apurinic/apyrimidinic) site. The AP-lyase activity cleaves the phosphodiester bond 3' to the AP site by a beta-elimination, leaving a 3'-terminal unsaturated sugar and a product with a terminal 5'-phosphate. This is Endonuclease III from Thermotoga maritima (strain ATCC 43589 / DSM 3109 / JCM 10099 / NBRC 100826 / MSB8).